The primary structure comprises 187 residues: Calcium and integrin-binding family member 2 (187 aa).

EF-hand domains follow at residues 66 to 101 (RENPFKERIVEAFSEDGEGNLTFNDFVDMFSVLCES), 103 to 138 (PRELKANYAFKIYDFNTDNFICKEDLEMTLARLTKS), and 144 to 179 (EVVLVCDKVIEEADLDGDGKLGFADFEDMIAKAPDF). Ca(2+) contacts are provided by aspartate 116, asparagine 118, aspartate 120, aspartate 127, aspartate 157, aspartate 159, aspartate 161, lysine 163, and aspartate 168.

Monomer. Homodimer. Interacts with WHRN and MYO7A. Interacts with ITGA2B (via C-terminus cytoplasmic tail region); this interaction is stabilized/increased in a calcium and magnesium-dependent manner. Interacts with ITGA7 (via C-terminus cytoplasmic tail region); this interaction is stabilized/increased in a calcium and magnesium-dependent manner. Interacts with TMC1. Interacts with TMC2. Interacts with PIEZO1. Expressed in inner and outer segments of photoreceptor cells, as well as in the pigmented epithelium. Also observed in the inner and outer plexiform layers and in the ganglion cell layer (at protein level). Expressed in sensory hair cell stereocilia, with expression mainly at the basal body of the kinocilium and in the hair bundle stereocilia; and the apical surface of hair cells (at protein level). Located in the tip region of the stereocilia and at the apical surface of hair cells around the cuticular plate (at protein level). Not expressed in the hair bundles of the vestibular hair cells. Strongly expressed in skeletal muscles, brain, kidney and liver. Expressed in the skeletal muscle, retina and cochlea. Expressed in megakaryocytes and endothelial cells. Expressed in heart, spleen, lung, and inner ear. In the inner ear, expressed in the vestibule, basilar membrane and spiral ganglion cells. Expressed in the supporting cells in both the organ of Corti and the vestibular sensory epithelia.

It localises to the cytoplasm. It is found in the cell projection. The protein resides in the stereocilium. Its subcellular location is the photoreceptor inner segment. The protein localises to the cilium. It localises to the photoreceptor outer segment. It is found in the cell membrane. The protein resides in the sarcolemma. In terms of biological role, calcium- and integrin-binding protein that plays a role in intracellular calcium homeostasis. Acts as an auxiliary subunit of the sensory mechanoelectrical transduction (MET) channel in hair cells. Essential for mechanoelectrical transduction (MET) currents in auditory hair cells and thereby required for hearing. Regulates the function of hair cell mechanotransduction by controlling the distribution of transmembrane channel-like proteins TMC1 and TMC2, and by regulating the function of the MET channels in hair cells. Required for the maintenance of auditory hair cell stereocilia bundle morphology and function and for hair-cell survival in the cochlea. Critical for proper photoreceptor cell maintenance and function. Plays a role in intracellular calcium homeostasis by decreasing ATP-induced calcium release. Seems to be dispensable for vestibular functions. The sequence is that of Calcium and integrin-binding family member 2 (Cib2) from Mus musculus (Mouse).